Reading from the N-terminus, the 282-residue chain is Leucine-rich protein (282 aa).

Functionally, not essential for viability or growth. Nevertheless, uncontrolled production in E.coli is detrimental to the normal physiology of the bacteria. This chain is Leucine-rich protein (lrp), found in Streptococcus dysgalactiae subsp. equisimilis (Streptococcus equisimilis).